A 562-amino-acid chain; its full sequence is Protein wntless (562 aa).

At 1–15 the chain is on the cytoplasmic side; sequence MSGTILENLSGRKLS. The helical transmembrane segment at 16–36 threads the bilayer; sequence ILVSSLMLCQVVCFLMGGLFA. Over 37–239 the chain is Lumenal; sequence PVPAGHQTVL…AIHQNGGFTQ (203 aa). Residues Asn58 and Asn103 are each glycosylated (N-linked (GlcNAc...) asparagine). Residues 240-260 form a helical membrane-spanning segment; the sequence is VWLVLKTLLFPFVIGIMMWFW. Residues 261-275 are Cytoplasmic-facing; sequence RRVHILQRSPALLEY. The helical transmembrane segment at 276–296 threads the bilayer; it reads MLFYLGGALSFLNLPLELLTL. Residues 297–311 are Lumenal-facing; that stretch reads GVEMPYMLLLSDVRQ. A helical membrane pass occupies residues 312 to 332; it reads GIFYAMLLSFWLVFAGEHMLI. Over 333 to 344 the chain is Cytoplasmic; that stretch reads QDSPSKSTIRSR. The helical transmembrane segment at 345–365 threads the bilayer; the sequence is YWKHLSAVVVGCISLFVFDIC. Over 366-390 the chain is Lumenal; sequence ERGVQMRNPFYSIWTTPLGAKVAMS. Residues 391–411 form a helical membrane-spanning segment; sequence FIVLAGVSAAIYFLFLCFMVW. Residues 412-441 are Cytoplasmic-facing; it reads KVFKDIGDKRTSLPSMSQARRLHYEGLIYR. A helical transmembrane segment spans residues 442-462; sequence FKFLMLATLLCAGLTVAGFIM. Topologically, residues 463-482 are lumenal; the sequence is GQMAEGHWKWNENIEIQLTS. The helical transmembrane segment at 483 to 503 threads the bilayer; it reads AFLTGVYGMWNIYIFALIILY. Over 504–562 the chain is Cytoplasmic; that stretch reads APSHKQWPTMRHSDETTQSNENIVASAASEEIEFSNLPSDSNPSEISSLTSFTRKVAFD.

Belongs to the wntless family. As to quaternary structure, interacts with wg; in the Golgi. Interacts with Vps35, a component of the retromer complex; wls stability is regulated by Vps35.

It is found in the presynaptic cell membrane. The protein resides in the postsynaptic cell membrane. Its subcellular location is the cell membrane. It localises to the endoplasmic reticulum membrane. The protein localises to the endosome membrane. It is found in the golgi apparatus membrane. A segment polarity gene required for wingless (wg)-dependent patterning processes, acting in both wg-sending cells and wg-target cells. In non-neuronal cells wls directs wg secretion. The wls traffic loop encompasses the Golgi, the cell surface, an endocytic compartment and a retrograde route leading back to the Golgi, and involves clathrin-mediated endocytosis and the retromer complex (a conserved protein complex consisting of Vps35 and Vps26). In neuronal cells (the larval motorneuron NMJ), the wg signal moves across the synapse via the release of wls-containing exosome-like vesicles. Postsynaptic wls is required for the trafficking of fz2 through the fz2-interacting protein Grip. The sequence is that of Protein wntless from Drosophila grimshawi (Hawaiian fruit fly).